We begin with the raw amino-acid sequence, 363 residues long: NAD(P)H-quinone oxidoreductase subunit 1, chloroplastic (363 aa).

A run of 6 helical transmembrane segments spans residues 30–50, 98–118, 129–149, 248–268, 300–320, and 343–363; these read LVPI…IVWL, FSIG…VIPF, IGIF…LMSG, YSGI…LLSS, IIGT…FLFI, and FLLP…LLSL.

Belongs to the complex I subunit 1 family. NDH is composed of at least 16 different subunits, 5 of which are encoded in the nucleus.

Its subcellular location is the plastid. It is found in the chloroplast thylakoid membrane. It carries out the reaction a plastoquinone + NADH + (n+1) H(+)(in) = a plastoquinol + NAD(+) + n H(+)(out). The enzyme catalyses a plastoquinone + NADPH + (n+1) H(+)(in) = a plastoquinol + NADP(+) + n H(+)(out). Its function is as follows. NDH shuttles electrons from NAD(P)H:plastoquinone, via FMN and iron-sulfur (Fe-S) centers, to quinones in the photosynthetic chain and possibly in a chloroplast respiratory chain. The immediate electron acceptor for the enzyme in this species is believed to be plastoquinone. Couples the redox reaction to proton translocation, and thus conserves the redox energy in a proton gradient. The chain is NAD(P)H-quinone oxidoreductase subunit 1, chloroplastic from Gossypium hirsutum (Upland cotton).